The chain runs to 483 residues: Glutamyl-tRNA(Gln) amidotransferase subunit A (483 aa).

Active-site charge relay system residues include lysine 76 and serine 151. Serine 175 (acyl-ester intermediate) is an active-site residue.

It belongs to the amidase family. GatA subfamily. As to quaternary structure, heterotrimer of A, B and C subunits.

It carries out the reaction L-glutamyl-tRNA(Gln) + L-glutamine + ATP + H2O = L-glutaminyl-tRNA(Gln) + L-glutamate + ADP + phosphate + H(+). Functionally, allows the formation of correctly charged Gln-tRNA(Gln) through the transamidation of misacylated Glu-tRNA(Gln) in organisms which lack glutaminyl-tRNA synthetase. The reaction takes place in the presence of glutamine and ATP through an activated gamma-phospho-Glu-tRNA(Gln). This chain is Glutamyl-tRNA(Gln) amidotransferase subunit A, found in Pseudomonas fluorescens (strain Pf0-1).